An 86-amino-acid polypeptide reads, in one-letter code: Neurotoxin LmNaTx34.2 (86 aa).

The first 18 residues, 1-18, serve as a signal peptide directing secretion; the sequence is MKTLILVVIALMVIEVKS. An LCN-type CS-alpha/beta domain is found at 19 to 85; the sequence is DGYLMVRAGR…IWTYEKNTCS (67 aa). Disulfide bonds link C32–C84, C36–C57, C43–C64, and C47–C66.

The protein belongs to the long (4 C-C) scorpion toxin superfamily. Sodium channel inhibitor family. Beta subfamily. Expressed by the venom gland.

Its subcellular location is the secreted. In terms of biological role, binds voltage-independently at site-4 of sodium channels (Nav) and shift the voltage of activation toward more negative potentials thereby affecting sodium channel activation and promoting spontaneous and repetitive firing. In Lychas mucronatus (Chinese swimming scorpion), this protein is Neurotoxin LmNaTx34.2.